The primary structure comprises 242 residues: Cytochrome c oxidase subunit 2 (242 aa).

The Mitochondrial intermembrane segment spans residues 7-33 (DVPVPYGLYFQDSATPTFDGIIELHDI). A helical membrane pass occupies residues 34–55 (VMFYIVVTIVLVSYLLFVIIKN). At 56 to 73 (FSNDHISYKYLTHGTTLE) the chain is on the mitochondrial matrix side. The chain crosses the membrane as a helical span at residues 74-98 (IVWTIFPVVILLFIAFPSFILLYLC). Over 99–242 (DEVIDPAMTI…DKFLSWLDEQ (144 aa)) the chain is Mitochondrial intermembrane. The Cu cation site is built by H177, C212, E214, C216, H220, and M223. E214 serves as a coordination point for Mg(2+).

The protein belongs to the cytochrome c oxidase subunit 2 family. In terms of assembly, component of the cytochrome c oxidase (complex IV, CIV), a multisubunit enzyme composed of a catalytic core of 3 subunits and several supernumerary subunits. The complex exists as a monomer or a dimer and forms supercomplexes (SCs) in the inner mitochondrial membrane with ubiquinol-cytochrome c oxidoreductase (cytochrome b-c1 complex, complex III, CIII). It depends on Cu cation as a cofactor. The signal sequence of COX2 is processed by IMP1.

It is found in the mitochondrion inner membrane. The catalysed reaction is 4 Fe(II)-[cytochrome c] + O2 + 8 H(+)(in) = 4 Fe(III)-[cytochrome c] + 2 H2O + 4 H(+)(out). Component of the cytochrome c oxidase, the last enzyme in the mitochondrial electron transport chain which drives oxidative phosphorylation. The respiratory chain contains 3 multisubunit complexes succinate dehydrogenase (complex II, CII), ubiquinol-cytochrome c oxidoreductase (cytochrome b-c1 complex, complex III, CIII) and cytochrome c oxidase (complex IV, CIV), that cooperate to transfer electrons derived from NADH and succinate to molecular oxygen, creating an electrochemical gradient over the inner membrane that drives transmembrane transport and the ATP synthase. Cytochrome c oxidase is the component of the respiratory chain that catalyzes the reduction of oxygen to water. Electrons originating from reduced cytochrome c in the intermembrane space (IMS) are transferred via the dinuclear copper A center (CU(A)) of subunit 2 and heme A of subunit 1 to the active site in subunit 1, a binuclear center (BNC) formed by heme A3 and copper B (CU(B)). The BNC reduces molecular oxygen to 2 water molecules using 4 electrons from cytochrome c in the IMS and 4 protons from the mitochondrial matrix. The protein is Cytochrome c oxidase subunit 2 (COX2) of Yarrowia lipolytica (strain CLIB 122 / E 150) (Yeast).